Reading from the N-terminus, the 379-residue chain is MPVPEQKQTVQLSSPMNAVSSSEDIKPPLGLNGVMKVPAHRIGTLSLSLTKHICAICGDRSSGKHYGVYSCEGCKGFFKRTVRKDLTYTCRDNKDCMIDKRQRNRCQYCRYQKCLAMGMKREAVQEERQRAKERSEAEFGGCANEDMPVEKILEAELAVEPKTETYVEANLSPSANSPNDPVTNICQAADKQLFTLVEWAKRIPHFSDLPLDDQVILLRAGWNELLIASFSHRSIAVKDGILLATGLHVHRNSAHTAGVGAIFDRVLTELVSKMRDMQMDKTELGCLRAIVLFNPDSKGLSNPSEVEALRERVYASLEAYCKHKYPDQPGRFAKLLLRLPALRSIGLKCLEHLFFFKLIGDTPIDTFLMEMLEAPHQIT.

The segment covering 1–22 (MPVPEQKQTVQLSSPMNAVSSS) has biased composition (polar residues). The disordered stretch occupies residues 1 to 24 (MPVPEQKQTVQLSSPMNAVSSSED). Residues 1 to 53 (MPVPEQKQTVQLSSPMNAVSSSEDIKPPLGLNGVMKVPAHRIGTLSLSLTKHI) form a modulating region. Positions 51–126 (KHICAICGDR…MGMKREAVQE (76 aa)) form a DNA-binding region, nuclear receptor. 4 residues coordinate Zn(2+): Cys54, Cys57, Cys71, and Cys74. An NR C4-type zinc finger spans residues 54 to 74 (CAICGDRSSGKHYGVYSCEGC). The tract at residues 79–84 (KRTVRK) is nuclear localization signal. Zn(2+) contacts are provided by Cys90, Cys96, Cys106, and Cys109. An NR C4-type zinc finger spans residues 90 to 109 (CRDNKDCMIDKRQRNRCQYC). Residues 120–141 (KREAVQEERQRAKERSEAEFGG) are hinge. In terms of domain architecture, NR LBD spans 144-375 (NEDMPVEKIL…TFLMEMLEAP (232 aa)). 9-cis-retinoate is bound by residues Arg233 and Ala244. All-trans-retinoate is bound by residues Arg233 and Ala244. The interval 265 to 285 (RVLTELVSKMRDMQMDKTELG) is required for nuclear export. The segment at 364-375 (IDTFLMEMLEAP) is AF-2.

It belongs to the nuclear hormone receptor family. NR2 subfamily. Homodimer. Heterodimer; with a rar molecule. Binds DNA preferentially as a rar/rxr heterodimer. In terms of tissue distribution, uniform expression from the blastula to mid-gastrula stages. At 12 hours post-fertilization (hpf), expressed strongly in the tail and weakly elsewhere. At 24 hpf, weak expression in the forebrain, eyes and pharyngeal endoderm and continued expression in the tail mesoderm. At 48 hpf, anterior expression limited to ventral cells underlying the head, medial expression in the pectoral fin bud mesoderm and continued tail expression.

The protein localises to the nucleus. Receptor for retinoic acid that acts as a transcription factor. Forms homo- or heterodimers with retinoic acid receptors (rars) and binds to target response elements in response to their ligands, all-trans or 9-cis retinoic acid, to regulate gene expression in various biological processes. The rar/rxr heterodimers bind to the retinoic acid response elements (RARE) composed of tandem 5'-AGGTCA-3' sites known as DR1-DR5 to regulate transcription. The high affinity ligand for rxrs is 9-cis retinoic acid. In the absence of ligand, the rar/rxr heterodimers associate with a multiprotein complex containing transcription corepressors that induce histone deacetylation, chromatin condensation and transcriptional suppression. On ligand binding, the corepressors dissociate from the receptors and coactivators are recruited leading to transcriptional activation. This Danio rerio (Zebrafish) protein is Retinoic acid receptor RXR-alpha-B (rxrab).